Consider the following 116-residue polypeptide: Protein Rev (116 aa).

Residues Ser-5 and Ser-8 each carry the phosphoserine; by host CK2 modification. The interval 18 to 26 is homomultimerization; the sequence is LIKFLYQSN. Residues 23 to 49 are disordered; sequence YQSNPPPNPEGTRQARRNRRRRWRERQ. The Nuclear localization signal and RNA-binding (RRE) motif lies at 34–50; the sequence is TRQARRNRRRRWRERQR. The segment covering 36–47 has biased composition (basic residues); that stretch reads QARRNRRRRWRE. Residues 73-84 carry the Nuclear export signal and binding to XPO1 motif; sequence LQLPPLERLTLD. Residues Ser-92 and Ser-99 each carry the phosphoserine; by host modification.

It belongs to the HIV-1 REV protein family. Homomultimer; when bound to the RRE. Multimeric assembly is essential for activity and may involve XPO1. Binds to human KPNB1, XPO1, TNPO1, RANBP5 and IPO7. Interacts with the viral Integrase. Interacts with human KHDRBS1. Interacts with human NAP1; this interaction decreases Rev multimerization and stimulates its activity. Interacts with human DEAD-box helicases DDX3 and DDX24; these interactions may serve for viral RNA export to the cytoplasm and packaging, respectively. Interacts with human PSIP1; this interaction may inhibit HIV-1 DNA integration by promoting dissociation of the Integrase-LEDGF/p75 complex. Asymmetrically arginine dimethylated at one site by host PRMT6. Methylation impairs the RNA-binding activity and export of viral RNA from the nucleus to the cytoplasm. In terms of processing, phosphorylated by protein kinase CK2. Presence of, and maybe binding to the N-terminus of the regulatory beta subunit of CK2 is necessary for CK2-mediated Rev's phosphorylation.

The protein resides in the host nucleus. Its subcellular location is the host nucleolus. It localises to the host cytoplasm. Functionally, escorts unspliced or incompletely spliced viral pre-mRNAs (late transcripts) out of the nucleus of infected cells. These pre-mRNAs carry a recognition sequence called Rev responsive element (RRE) located in the env gene, that is not present in fully spliced viral mRNAs (early transcripts). This function is essential since most viral proteins are translated from unspliced or partially spliced pre-mRNAs which cannot exit the nucleus by the pathway used by fully processed cellular mRNAs. Rev itself is translated from a fully spliced mRNA that readily exits the nucleus. Rev's nuclear localization signal (NLS) binds directly to KPNB1/Importin beta-1 without previous binding to KPNA1/Importin alpha-1. KPNB1 binds to the GDP bound form of RAN (Ran-GDP) and targets Rev to the nucleus. In the nucleus, the conversion from Ran-GDP to Ran-GTP dissociates Rev from KPNB1 and allows Rev's binding to the RRE in viral pre-mRNAs. Rev multimerization on the RRE via cooperative assembly exposes its nuclear export signal (NES) to the surface. Rev can then form a complex with XPO1/CRM1 and Ran-GTP, leading to nuclear export of the complex. Conversion from Ran-GTP to Ran-GDP mediates dissociation of the Rev/RRE/XPO1/RAN complex, so that Rev can return to the nucleus for a subsequent round of export. Beside KPNB1, also seems to interact with TNPO1/Transportin-1, RANBP5/IPO5 and IPO7/RANBP7 for nuclear import. The nucleoporin-like HRB/RIP is an essential cofactor that probably indirectly interacts with Rev to release HIV RNAs from the perinuclear region to the cytoplasm. The sequence is that of Protein Rev from Human immunodeficiency virus type 1 group M subtype B (isolate PCV12) (HIV-1).